Consider the following 630-residue polypeptide: MRERGQDSLAGLVLYVGLFGHPGMLHRAKYSRFRNESITSLDEGSSGGSVGNKGSPQPPHPALAPHLPTEDATLPSQESPTPLCTLIPRMASMKLANPATLLSLKNFCLGTKEVPRLKLQESRDPGSSGPSSPETSLSRSGTAPPPQQDLVGHRATALTPDSCPLPGPGEPTLRSRQDRHFLQHLLGMGMNYCVRYMGCVEVLQSMRSLDFGMRTQVTREAISRLCEAVPGANGAIKKRKPPVKFLSTVLGKSNLQFSGMNIKLTISTCSLTLMNLDNQQIIANHHMQSISFASGGDPDTTDYVAYVAKDPVNQRACHILECHNGMAQDVISTIGQAFELRFKQYLKNPSLNTSCESEEVHIDSHAEEREDHEYYNEIPGKQPPVGGVSDMRIKVQATEQMAYCPIQCEKLCYLPGNSKCSSVYENCLEQSRAIGNVHPRGVQSQRDTSLLKHTCRVDLFDDPCYINTQALQSTPGSAGNQRSAQPLGSPWHCGKAPETVQPGATAQPASSHSLPHIKQQLWSEECYHGKLSRKAAESLLVKDGDFLVRESATSPGQYVLSGLQGGQAKHLLLVDPEGKVRTKDHVFDNVGHLIRYHMDNSLPIISSGSEVSLKQPVRKDNNPALLHSNK.

Positions 1–185 (MRERGQDSLA…RQDRHFLQHL (185 aa)) are CH2. Disordered regions lie at residues 39-80 (TSLD…QESP) and 118-150 (KLQESRDPGSSGPSSPETSLSRSGTAPPPQQDL). Over residues 125-142 (PGSSGPSSPETSLSRSGT) the composition is skewed to low complexity. The PID domain maps to 186–369 (LGMGMNYCVR…VHIDSHAEER (184 aa)). Residues 370 to 525 (EDHEYYNEIP…HIKQQLWSEE (156 aa)) are CH1. Tyrosine 424 carries the post-translational modification Phosphotyrosine. Composition is skewed to polar residues over residues 471–486 (LQSTPGSAGNQRSAQP) and 502–513 (PGATAQPASSHS). Residues 471-514 (LQSTPGSAGNQRSAQPLGSPWHCGKAPETVQPGATAQPASSHSL) form a disordered region. The SH2 domain maps to 526 to 617 (CYHGKLSRKA…GSEVSLKQPV (92 aa)).

Interacts (via PID domain) with phosphorylated MUSK (via NPXY motif); undergoes tyrosine phosphorylation downstream of activated MUSK. Interacts with GRB2; the interaction is dependent of Tyr-424 phosphorylation and increased by EGF. In terms of processing, phosphorylated; the phosphorylation is enhanced by EGF. Phosphorylation at Tyr-424 is required for the interaction with GRB2. As to expression, only expressed in melanomas. Weakly expressed in normal melanocytes and benign nevi. Highly expressed at the transition from radial growth phase to vertical growth phase and metastatic melanomas, when tumor cells acquire migratory competence and invasive potential.

The protein resides in the postsynaptic cell membrane. Its function is as follows. Activates both Ras-dependent and Ras-independent migratory pathways in melanomas. Contributes to the early phases of agrin-induced tyrosine phosphorylation of CHRNB1. The sequence is that of SHC-transforming protein 4 (SHC4) from Homo sapiens (Human).